The sequence spans 245 residues: 2,3-bisphosphoglycerate-dependent phosphoglycerate mutase (245 aa).

Residues 8–15 (RHGQSLWN), 21–22 (TG), R60, 87–90 (ERHY), K98, 114–115 (RR), and 183–184 (GN) contribute to the substrate site. Catalysis depends on H9, which acts as the Tele-phosphohistidine intermediate. E87 serves as the catalytic Proton donor/acceptor.

Belongs to the phosphoglycerate mutase family. BPG-dependent PGAM subfamily.

The enzyme catalyses (2R)-2-phosphoglycerate = (2R)-3-phosphoglycerate. Its pathway is carbohydrate degradation; glycolysis; pyruvate from D-glyceraldehyde 3-phosphate: step 3/5. In terms of biological role, catalyzes the interconversion of 2-phosphoglycerate and 3-phosphoglycerate. The sequence is that of 2,3-bisphosphoglycerate-dependent phosphoglycerate mutase from Bacillus cytotoxicus (strain DSM 22905 / CIP 110041 / 391-98 / NVH 391-98).